A 94-amino-acid chain; its full sequence is Large ribosomal subunit protein bL27 (94 aa).

A propeptide spanning residues 1–9 (MLRLDLQFF) is cleaved from the precursor.

Belongs to the bacterial ribosomal protein bL27 family. Post-translationally, the N-terminus is cleaved by ribosomal processing cysteine protease Prp.

The chain is Large ribosomal subunit protein bL27 from Bacillus pumilus (strain SAFR-032).